The following is a 301-amino-acid chain: Enolase-phosphatase E1 (301 aa).

The Mg(2+) site is built by Asp-22 and Glu-24. Residues 163-164 (SS) and Lys-197 contribute to the substrate site. Asp-222 is a Mg(2+) binding site. Residues 273–301 (AQAGDTEAKRSASGDGALAAKKAPPTHDF) form a disordered region.

This sequence belongs to the HAD-like hydrolase superfamily. MasA/MtnC family. Monomer. Mg(2+) serves as cofactor.

It is found in the cytoplasm. Its subcellular location is the nucleus. The catalysed reaction is 5-methylsulfanyl-2,3-dioxopentyl phosphate + H2O = 1,2-dihydroxy-5-(methylsulfanyl)pent-1-en-3-one + phosphate. The protein operates within amino-acid biosynthesis; L-methionine biosynthesis via salvage pathway; L-methionine from S-methyl-5-thio-alpha-D-ribose 1-phosphate: step 3/6. It functions in the pathway amino-acid biosynthesis; L-methionine biosynthesis via salvage pathway; L-methionine from S-methyl-5-thio-alpha-D-ribose 1-phosphate: step 4/6. In terms of biological role, bifunctional enzyme that catalyzes the enolization of 2,3-diketo-5-methylthiopentyl-1-phosphate (DK-MTP-1-P) into the intermediate 2-hydroxy-3-keto-5-methylthiopentenyl-1-phosphate (HK-MTPenyl-1-P), which is then dephosphorylated to form the acireductone 1,2-dihydroxy-3-keto-5-methylthiopentene (DHK-MTPene). This Monosiga brevicollis (Choanoflagellate) protein is Enolase-phosphatase E1.